The sequence spans 297 residues: Mitochondrial ornithine transporter 1 (297 aa).

Solcar repeat units lie at residues 15–97 (GSPA…LKLT), 102–205 (DPTL…FKKN), and 212–292 (KPHF…FRET). The next 6 helical transmembrane spans lie at 18 to 38 (ASTFSAALVSSAISNVIGYPL), 72 to 91 (GLTLPLISATLSRSVSFTVY), 107 to 127 (YFISGLGTGTFISLFACPFEY), 184 to 204 (HLTRDALGSACYFTIYETFKK), 215 to 235 (FAYAFSGAFCGALSWILVFPV), and 264 to 285 (IYRGIGISLMRSALINSCNFTL).

Belongs to the mitochondrial carrier (TC 2.A.29) family.

The protein resides in the mitochondrion inner membrane. In terms of biological role, required for arginine biosynthesis. Transports ornithine synthesized from glutamate in the mitochondrial matrix to the cytosol, where it is converted to arginine. The polypeptide is Mitochondrial ornithine transporter 1 (Schizosaccharomyces pombe (strain 972 / ATCC 24843) (Fission yeast)).